A 521-amino-acid polypeptide reads, in one-letter code: Manganese transporter pdt1 (521 aa).

Ser-42 carries the phosphoserine modification. Phosphothreonine is present on Thr-43. The next 12 helical transmembrane spans lie at 71 to 91 (YCKF…PGNY), 104 to 124 (KLLF…SLCI), 152 to 172 (VLAE…TAVA), 179 to 199 (IPLV…LIAW), 210 to 230 (IFET…AVVL), 233 to 253 (VHIG…TVFS), 260 to 280 (SIGI…SGLV), 325 to 345 (LFTF…AVFY), 373 to 393 (LFAV…TIAG), 417 to 437 (IAII…LNQV), 440 to 460 (ASQV…VMFT), and 495 to 515 (IVTW…IVWL).

The protein belongs to the NRAMP family.

The protein resides in the endoplasmic reticulum membrane. Transports manganese ions into the cell. Regulates cell morphogenesis through control of manganese homeostasis. The polypeptide is Manganese transporter pdt1 (pdt1) (Schizosaccharomyces pombe (strain 972 / ATCC 24843) (Fission yeast)).